The following is a 383-amino-acid chain: Succinyl-diaminopimelate desuccinylase (383 aa).

H69 serves as a coordination point for Zn(2+). D71 is an active-site residue. D103 serves as a coordination point for Zn(2+). The active-site Proton acceptor is the E137. Zn(2+) contacts are provided by E138, E166, and H357.

Belongs to the peptidase M20A family. DapE subfamily. Homodimer. Zn(2+) serves as cofactor. Co(2+) is required as a cofactor.

It catalyses the reaction N-succinyl-(2S,6S)-2,6-diaminopimelate + H2O = (2S,6S)-2,6-diaminopimelate + succinate. Its pathway is amino-acid biosynthesis; L-lysine biosynthesis via DAP pathway; LL-2,6-diaminopimelate from (S)-tetrahydrodipicolinate (succinylase route): step 3/3. Functionally, catalyzes the hydrolysis of N-succinyl-L,L-diaminopimelic acid (SDAP), forming succinate and LL-2,6-diaminopimelate (DAP), an intermediate involved in the bacterial biosynthesis of lysine and meso-diaminopimelic acid, an essential component of bacterial cell walls. In Rickettsia typhi (strain ATCC VR-144 / Wilmington), this protein is Succinyl-diaminopimelate desuccinylase.